The sequence spans 178 residues: Acireductone dioxygenase (178 aa).

Positions 100, 102, 106, and 145 each coordinate Fe(2+). 4 residues coordinate Ni(2+): H100, H102, E106, and H145.

This sequence belongs to the acireductone dioxygenase (ARD) family. As to quaternary structure, monomer. Requires Fe(2+) as cofactor. Ni(2+) serves as cofactor.

It carries out the reaction 1,2-dihydroxy-5-(methylsulfanyl)pent-1-en-3-one + O2 = 3-(methylsulfanyl)propanoate + CO + formate + 2 H(+). The catalysed reaction is 1,2-dihydroxy-5-(methylsulfanyl)pent-1-en-3-one + O2 = 4-methylsulfanyl-2-oxobutanoate + formate + 2 H(+). Its pathway is amino-acid biosynthesis; L-methionine biosynthesis via salvage pathway; L-methionine from S-methyl-5-thio-alpha-D-ribose 1-phosphate: step 5/6. In terms of biological role, catalyzes 2 different reactions between oxygen and the acireductone 1,2-dihydroxy-3-keto-5-methylthiopentene (DHK-MTPene) depending upon the metal bound in the active site. Fe-containing acireductone dioxygenase (Fe-ARD) produces formate and 2-keto-4-methylthiobutyrate (KMTB), the alpha-ketoacid precursor of methionine in the methionine recycle pathway. Ni-containing acireductone dioxygenase (Ni-ARD) produces methylthiopropionate, carbon monoxide and formate, and does not lie on the methionine recycle pathway. In Bacillus subtilis (strain 168), this protein is Acireductone dioxygenase (mtnD).